Consider the following 440-residue polypeptide: Cyclic dipeptide prenyltransferase (440 aa).

Residues 1 to 33 are disordered; that stretch reads MDGEMTASPPDISACDTSAVDEQTGQSGQSQAP. Residues 20 to 32 show a composition bias toward polar residues; that stretch reads VDEQTGQSGQSQA. Residues Thr108 and Glu116 each contribute to the substrate site. Positions 129, 219, and 221 each coordinate dimethylallyl diphosphate. Residue Phe223 coordinates substrate. Dimethylallyl diphosphate-binding residues include Lys286, Tyr288, Tyr366, Tyr431, and Tyr435.

It belongs to the tryptophan dimethylallyltransferase family.

The catalysed reaction is harmol + dimethylallyl diphosphate = 6-(3-dimethylallyl)harmol + diphosphate. It carries out the reaction an N-terminal L-tryptophanyl-L-alpha-aminoacyl-[peptide] + H2O = an N-terminal L-alpha-aminoacyl-[peptide] + L-tryptophan. It catalyses the reaction (R)-benzodiazepinedione + dimethylallyl diphosphate = (2S,3R,11R)-aszonalenin + diphosphate. The enzyme catalyses (S)-benzodiazepinedione + dimethylallyl diphosphate = (2S,3R,11S)-aszonalenin + diphosphate. Functionally, prenyltransferase that catalyzes reverse prenylation at position N-1 of tryptophan-containing cyclic dipeptides. Accepts only dimethylallyl diphosphate (DMAPP) as the prenyl donor but shows broad substrate specificities toward its aromatic substrates. Also shows tryptophan aminopeptidase activity with preference for linear peptides containing a tryptophanyl moiety at the N-terminus. The sequence is that of Cyclic dipeptide prenyltransferase from Aspergillus fumigatus (Neosartorya fumigata).